The sequence spans 443 residues: Protein IQ-DOMAIN 11 (443 aa).

A calmodulin-binding region spans residues 5–20; that stretch reads KGLFTVLKRIFISEVN. 2 short sequence motifs (nuclear localization signal) span residues 11–18 and 27–34; these read LKRIFISE and RRKWTFWK. A disordered region spans residues 44-65; the sequence is ITAPPEHRTSHESHEEQKEEIV. The span at 48–64 shows a compositional bias: basic and acidic residues; sequence PEHRTSHESHEEQKEEI. 2 consecutive IQ domains span residues 113–138 and 139–161; these read AATR…GIVK and LQAY…CLQS. Over residues 277–293 the composition is skewed to basic and acidic residues; that stretch reads FSSKTKPKDETLNEKQL. The disordered stretch occupies residues 277-361; that stretch reads FSSKTKPKDE…PRSFDTQSES (85 aa).

It belongs to the IQD family. Binds to multiple calmodulin (CaM) in the presence of Ca(2+) and CaM-like proteins. Expressed in hypocotyls, cotyledons, leaves and petioles.

The protein resides in the nucleus. Its subcellular location is the cytoplasm. It is found in the cytoskeleton. In terms of biological role, may be involved in cooperative interactions with calmodulins or calmodulin-like proteins. Recruits calmodulin proteins to microtubules, thus being a potential scaffold in cellular signaling and trafficking. Regulates cell shape and elongation in aerial organs (i.e. epidermis pavement cells) probably by regulating cortical microtubules (MT) arrays orientation. May associate with nucleic acids and regulate gene expression at the transcriptional or post-transcriptional level. The sequence is that of Protein IQ-DOMAIN 11 from Arabidopsis thaliana (Mouse-ear cress).